Here is a 149-residue protein sequence, read N- to C-terminus: Calmodulin-2 (149 aa).

A2 carries the N-acetylalanine modification. EF-hand domains lie at 8 to 43 (EQIA…LGQN), 44 to 79 (PTEA…KMKD), 81 to 116 (DSEE…LGEK), and 117 to 149 (LTDE…MLAK). Residues D21, D23, D25, C27, E32, D57, D59, N61, T63, E68, D94, D96, N98, Y100, and D105 each contribute to the Ca(2+) site. N6,N6,N6-trimethyllysine is present on K116. D130, D132, D134, Q136, and E141 together coordinate Ca(2+).

Belongs to the calmodulin family.

Calmodulin mediates the control of a large number of enzymes, ion channels and other proteins by Ca(2+). Among the enzymes to be stimulated by the calmodulin-Ca(2+) complex are a number of protein kinases and phosphatases. In Petunia hybrida (Petunia), this protein is Calmodulin-2 (CAM72).